Here is a 140-residue protein sequence, read N- to C-terminus: MYLAREMDLAILPSRRLVKFKAFTKRSLSMDEIELASLSSRAFLFNFLPLLLLLAFLDIFASSNASFLAAVLIKILVKSVFSALGSSLKSFTSGSRASDCLAALEFFDIFLAMLCFRRYLTSIVKEKTTFCRLCSHIQYF.

Transmembrane regions (helical) follow at residues 42 to 62 (AFLFNFLPLLLLLAFLDIFAS), 65 to 85 (ASFLAAVLIKILVKSVFSALG), and 96 to 116 (RASDCLAALEFFDIFLAMLCF).

It localises to the membrane. This is an uncharacterized protein from Saccharomyces cerevisiae (strain ATCC 204508 / S288c) (Baker's yeast).